Consider the following 106-residue polypeptide: Small ribosomal subunit protein bS18 (106 aa).

The segment at 1 to 39 (MNGRNNDMGRNGGADYDDRDFGRTPDLNADAPGRRRTGR) is disordered.

Belongs to the bacterial ribosomal protein bS18 family. In terms of assembly, part of the 30S ribosomal subunit. Forms a tight heterodimer with protein bS6.

Binds as a heterodimer with protein bS6 to the central domain of the 16S rRNA, where it helps stabilize the platform of the 30S subunit. In Sorangium cellulosum (strain So ce56) (Polyangium cellulosum (strain So ce56)), this protein is Small ribosomal subunit protein bS18.